The following is a 466-amino-acid chain: Gamma-aminobutyric acid permease (466 aa).

The Cytoplasmic portion of the chain corresponds to G2–T20. A run of 2 helical transmembrane segments spans residues M21–A41 and E42–M62. Residues R63–W96 lie on the Cytoplasmic side of the membrane. Residues L97 to L117 traverse the membrane as a helical segment. Residue H118 is a topological domain, periplasmic. A helical transmembrane segment spans residues S119–G139. Topologically, residues S140–F153 are cytoplasmic. A helical membrane pass occupies residues W154–I174. Over S175–G199 the chain is Periplasmic. A helical membrane pass occupies residues F200 to V220. The Cytoplasmic portion of the chain corresponds to T221 to S246. A helical membrane pass occupies residues I247–L267. Over K268–K286 the chain is Periplasmic. The helical transmembrane segment at L287–T307 threads the bilayer. Topologically, residues A308 to P334 are cytoplasmic. A helical transmembrane segment spans residues Y335–A355. Residues P356–K358 are Periplasmic-facing. A helical transmembrane segment spans residues V359 to A379. The Cytoplasmic portion of the chain corresponds to V380–L402. The helical transmembrane segment at Y403–F423 threads the bilayer. Over R424–Q428 the chain is Periplasmic. A helical membrane pass occupies residues L429 to A449. Topologically, residues R450–R466 are cytoplasmic.

It belongs to the amino acid-polyamine-organocation (APC) superfamily. Amino acid transporter (AAT) (TC 2.A.3.1) family. Monomer.

The protein resides in the cell inner membrane. The catalysed reaction is 4-aminobutanoate(in) + H(+)(in) = 4-aminobutanoate(out) + H(+)(out). The protein operates within amino-acid degradation; 4-aminobutanoate degradation. Uptake is stimulated by ammonium sulfate and abolished by 2,4-dinitrophenol. Is affected both topologically and kinetically by phospholipid composition of the membrane. In cells lacking phosphatidylethanolamine (PE), the N-terminal hairpin is inverted relative to the membrane and the rate of GABA transport is reduced by more than 99%. Functionally, transporter for gamma-aminobutyrate (GABA). Transport is driven by the membrane potential. Can also transport a number of GABA analogs such as nipecotic acid or muscimol. The chain is Gamma-aminobutyric acid permease from Escherichia coli (strain K12).